Consider the following 451-residue polypeptide: Prenyltransferase anuH (451 aa).

Arginine 105, lysine 189, tyrosine 191, lysine 257, tyrosine 259, and tyrosine 422 together coordinate dimethylallyl diphosphate.

The protein belongs to the tryptophan dimethylallyltransferase family.

It catalyses the reaction (8S)-annullatin E + dimethylallyl diphosphate = (8S)-annullatin J + diphosphate. The protein operates within secondary metabolite biosynthesis. Its function is as follows. Cytochrome P450 monooxygenase; part of the gene cluster that mediates the biosynthesis of annullatin D, an alkylated aromatic polyketide with a fused dihydrobenzofuran lactone ring system that exhibits potent agonistic activities toward the cannabinoid receptors. Within the pathway, anuH uses dimethylallyl diphosphate (DMAPP) to prenylate (8S)-annullatin E to produce (8S)-annullatin J. Geranyl and farnesyl diphosphate are not consumed by anuH for prenylation. 2-hydroxymethyl-3-pentylphenol, without the hydroxyl group at the side chain, is also accepted by anuH, but only with low conversion yield. The annullatin backbone 2-hydroxymethyl-3-pentylphenol is assembled from one acetyl-CoA starter unit and 5 malonyl-CoA elongation units by cooperation of the highly reducing polyketide synthase anuA, the short-chain dehydrogenase anuB and the oxidoreductase anuC, before being hydroxylated at the C-5 alkyl chain by the cytochrome P450 monooxygenase anuE to form (8S)-annullatin E. The prenyltransferase anuH subsequently installs one isoprenyl group at the benzene ring to form (8S)-annullatin J. Enzymatic or nonenzymatic dihydro-benzofuran ring formation between the prenyl and the phenolic hydroxyl groups in (8S)-annullatin J results in two diastereomers (2S,9S)-annullatin H and compound 12. The intermediate (2S,9S)-annullatin H is then converted to (2S,9S)-annullatin D by the FAD-linked oxidoreductase anuG-catalyzed five-member lactone ring formation. The isomer 12 acts as a substrate for the short-chain dehydrogenase anuF and is oxidized to (2R)-annullatin F, which is subsequently acetylated by an acetyltransferase leading to (2R)-annullatin G formation. The remaining enzymes identified within the cluster, anuD, anuI and anuJ, seem not to be involved in annullatin biosynthesis. This is Prenyltransferase anuH from Penicillium roqueforti (strain FM164).